A 360-amino-acid polypeptide reads, in one-letter code: Cinnamyl alcohol dehydrogenase 2 (360 aa).

The Enoyl reductase (ER) domain maps to 23 to 351 (GVLSPFNFSR…KADVKYRFVI (329 aa)). Residue Cys-50 coordinates Zn(2+). Ser-52 contacts an alcohol. Ser-52 contributes to the NADP(+) binding site. Residues Asp-53, His-72, Glu-73, Cys-103, Cys-106, Cys-109, Cys-117, and Cys-166 each contribute to the Zn(2+) site. His-72 provides a ligand contact to an alcohol. Positions 192, 194, 195, 214, 215, 216, 219, 220, 277, 279, 301, and 348 each coordinate NADP(+).

It belongs to the zinc-containing alcohol dehydrogenase family. Class-P subfamily. Homodimer. Zn(2+) is required as a cofactor. Mainly expressed in young roots and, to a lower extent, in stems and leaves.

It localises to the cytoplasm. The catalysed reaction is (E)-cinnamyl alcohol + NADP(+) = (E)-cinnamaldehyde + NADPH + H(+). Its function is as follows. Alcohol dehydrogenase that catalyzes the conversion of (E)-cinnamyl alcohol to (E)-cinnamaldehyde. The chain is Cinnamyl alcohol dehydrogenase 2 from Rauvolfia serpentina (Serpentine wood).